We begin with the raw amino-acid sequence, 312 residues long: Src-like-adapter (312 aa).

Residues 1–33 form a disordered region; it reads MLCRLPGPSTSRGEKEMGNSMKSTPAPLERPLS. Residues 38 to 98 form the SH3 domain; it reads LESDFLAVLN…PGICVARVYH (61 aa). One can recognise an SH2 domain in the interval 100 to 191; it reads WLFEGLGRDK…GLCCVLTTPC (92 aa). The segment at 206–312 is SLA C-terminal; it reads CTSPGSPVTL…TQKTKALTAT (107 aa). The residue at position 274 (serine 274) is a Phosphoserine.

In terms of assembly, homodimer. Interacts with phosphorylated CBL, SYK and LAT. Homodimerization and interaction with phosphorylated CBL occurs via its C-terminal domain. Interacts with PDGFRB and EPHA2. Interacts with phosphorylated proteins ZAP70; CD3Z; VAV1 and LCP2 via its SH2 domain. Post-translationally, phosphorylated.

It is found in the cytoplasm. It localises to the endosome. In terms of biological role, adapter protein, which negatively regulates T-cell receptor (TCR) signaling. Inhibits T-cell antigen-receptor induced activation of nuclear factor of activated T-cells. Involved in the negative regulation of positive selection and mitosis of T-cells. May act by linking signaling proteins such as ZAP70 with CBL, leading to a CBL dependent degradation of signaling proteins. The chain is Src-like-adapter (Sla) from Rattus norvegicus (Rat).